The sequence spans 365 residues: 1-deoxy-D-xylulose 5-phosphate reductoisomerase (365 aa).

NADPH contacts are provided by Thr7, Gly8, Ser9, Ile10, Ala31, Lys32, Asn33, and Asn114. Residue Lys115 coordinates 1-deoxy-D-xylulose 5-phosphate. Glu116 serves as a coordination point for NADPH. Asp134 is a Mn(2+) binding site. 4 residues coordinate 1-deoxy-D-xylulose 5-phosphate: Ser135, Glu136, Ser158, and His181. Glu136 is a Mn(2+) binding site. Gly187 is a binding site for NADPH. Residues Ser194, Asn199, Lys200, and Glu203 each contribute to the 1-deoxy-D-xylulose 5-phosphate site. Mn(2+) is bound at residue Glu203.

This sequence belongs to the DXR family. The cofactor is Mg(2+). It depends on Mn(2+) as a cofactor.

It catalyses the reaction 2-C-methyl-D-erythritol 4-phosphate + NADP(+) = 1-deoxy-D-xylulose 5-phosphate + NADPH + H(+). The protein operates within isoprenoid biosynthesis; isopentenyl diphosphate biosynthesis via DXP pathway; isopentenyl diphosphate from 1-deoxy-D-xylulose 5-phosphate: step 1/6. Functionally, catalyzes the NADPH-dependent rearrangement and reduction of 1-deoxy-D-xylulose-5-phosphate (DXP) to 2-C-methyl-D-erythritol 4-phosphate (MEP). The chain is 1-deoxy-D-xylulose 5-phosphate reductoisomerase from Campylobacter curvus (strain 525.92).